The following is a 607-amino-acid chain: NAD-dependent malic enzyme 2, mitochondrial (607 aa).

The N-terminal 32 residues, 1-32 (MMWKNIAGLSKAAAAARTHGSRRCFSTAIPGP), are a transit peptide targeting the mitochondrion. The active-site Proton donor is the tyrosine 136. Arginine 189 lines the NAD(+) pocket. Lysine 207 serves as the catalytic Proton acceptor. The a divalent metal cation site is built by glutamate 278, aspartate 279, and aspartate 302. The NAD(+) site is built by aspartate 302 and asparagine 449.

This sequence belongs to the malic enzymes family. Homodimer. Heterodimer of two related subunits in NAD-MEH complex. Interacts with NAD-ME1. Requires Mg(2+) as cofactor. It depends on Mn(2+) as a cofactor. As to expression, expressed in leaves, stems, flowers, and roots (at protein level). Present in pollen.

The protein resides in the mitochondrion. It carries out the reaction (S)-malate + NAD(+) = pyruvate + CO2 + NADH. Activated by 2-ketoglutarate, phosphoenolpyruvate (PEP), fructose 1,6-biphosphate (FBP) and coenzyme A (acetyl-CoA and CoA) as homodimer and by oxaloacetate (OAA), 2-ketoglutarate, succinate, fumarate and CoA as heterodimer NAD-MEH. Repressed by succinate and fumarate as homodimer, in the presence of NAD(+) and competitively toward the substrate L-malate. Its function is as follows. Involved in the regulation of sugars and amino acids metabolisms during the night period. The sequence is that of NAD-dependent malic enzyme 2, mitochondrial (NAD-ME2) from Arabidopsis thaliana (Mouse-ear cress).